The sequence spans 405 residues: DNA primase DnaG (405 aa).

The 77-residue stretch at 172-248 folds into the Toprim domain; it reads DSIIVVEGRA…HIDYIARAPP (77 aa). Mg(2+)-binding residues include E178, D222, and D224. The tract at residues 279–302 is disordered; that stretch reads AAGEKTESQMSPQQPQLTQTQPTT. Low complexity predominate over residues 290–302; sequence PQQPQLTQTQPTT.

Belongs to the archaeal DnaG primase family. As to quaternary structure, forms a ternary complex with MCM helicase and DNA. Component of the archaeal exosome complex. It depends on Mg(2+) as a cofactor.

It carries out the reaction ssDNA + n NTP = ssDNA/pppN(pN)n-1 hybrid + (n-1) diphosphate.. In terms of biological role, RNA polymerase that catalyzes the synthesis of short RNA molecules used as primers for DNA polymerase during DNA replication. Also part of the exosome, which is a complex involved in RNA degradation. Acts as a poly(A)-binding protein that enhances the interaction between heteromeric, adenine-rich transcripts and the exosome. This chain is DNA primase DnaG, found in Pyrobaculum islandicum (strain DSM 4184 / JCM 9189 / GEO3).